The chain runs to 284 residues: Phosphatidylglycerol--prolipoprotein diacylglyceryl transferase (284 aa).

The next 7 membrane-spanning stretches (helical) occupy residues 19-39 (ISFYWYGMMYVLSFIFAMWFL), 60-80 (LLYLNFLGVVIGGRIGYVLFY), 98-118 (GGMSFHGGLIGVIISIMWFSY), 130-150 (FIVPAVPVGLGLGRLGNFING), 199-219 (QLYEMILEGIVLFVVIYIFSC), 225-245 (GSISGLFLLLYGLFRIIIEFF), and 258-278 (FITLGQVLSFPMVIFGFIIMY). Arginine 143 is a binding site for a 1,2-diacyl-sn-glycero-3-phospho-(1'-sn-glycerol).

It belongs to the Lgt family.

It is found in the cell inner membrane. It carries out the reaction L-cysteinyl-[prolipoprotein] + a 1,2-diacyl-sn-glycero-3-phospho-(1'-sn-glycerol) = an S-1,2-diacyl-sn-glyceryl-L-cysteinyl-[prolipoprotein] + sn-glycerol 1-phosphate + H(+). Its pathway is protein modification; lipoprotein biosynthesis (diacylglyceryl transfer). In terms of biological role, catalyzes the transfer of the diacylglyceryl group from phosphatidylglycerol to the sulfhydryl group of the N-terminal cysteine of a prolipoprotein, the first step in the formation of mature lipoproteins. This is Phosphatidylglycerol--prolipoprotein diacylglyceryl transferase from Blochmanniella floridana.